A 76-amino-acid chain; its full sequence is MIYKVFYQETKERSPRREKTRALYLEIEAANELEGRIQARKLIEENTPYNIEFIELLSDKHLEYEKESGTFELTEF.

The protein belongs to the RNA polymerase subunit epsilon family. As to quaternary structure, RNAP is composed of a core of 2 alpha, a beta and a beta' subunit. The core is associated with a delta subunit, and at least one of epsilon or omega. When a sigma factor is associated with the core the holoenzyme is formed, which can initiate transcription.

The enzyme catalyses RNA(n) + a ribonucleoside 5'-triphosphate = RNA(n+1) + diphosphate. Its function is as follows. A non-essential component of RNA polymerase (RNAP). The sequence is that of DNA-directed RNA polymerase subunit epsilon from Streptococcus sanguinis (strain SK36).